The following is a 515-amino-acid chain: 1-pyrroline-5-carboxylate dehydrogenase 2 (515 aa).

Catalysis depends on residues glutamate 286 and cysteine 320.

This sequence belongs to the aldehyde dehydrogenase family. RocA subfamily.

The enzyme catalyses L-glutamate 5-semialdehyde + NAD(+) + H2O = L-glutamate + NADH + 2 H(+). It participates in amino-acid degradation; L-proline degradation into L-glutamate; L-glutamate from L-proline: step 2/2. Important for the use of proline as a sole carbon and energy source or a sole nitrogen source. The chain is 1-pyrroline-5-carboxylate dehydrogenase 2 from Bacillus subtilis (strain 168).